Reading from the N-terminus, the 92-residue chain is Small ribosomal subunit protein uS19 (92 aa).

The segment at 72-92 (GEFSPTRTYTGHGSDKKSKRG) is disordered.

Belongs to the universal ribosomal protein uS19 family.

Its function is as follows. Protein S19 forms a complex with S13 that binds strongly to the 16S ribosomal RNA. This chain is Small ribosomal subunit protein uS19, found in Gluconobacter oxydans (strain 621H) (Gluconobacter suboxydans).